The sequence spans 231 residues: Chalcone--flavanone isomerase (231 aa).

Residues Thr-46, Asn-112, and Ser-189 each contribute to the substrate site.

This sequence belongs to the chalcone isomerase family.

The catalysed reaction is a chalcone = a flavanone.. It functions in the pathway secondary metabolite biosynthesis; flavonoid biosynthesis. Its function is as follows. Catalyzes the intramolecular cyclization of bicyclic chalcones into tricyclic (S)-flavanones. Responsible for the isomerization of 4,2',4',6'-tetrahydroxychalcone (also termed chalcone) into naringenin. In Hordeum vulgare (Barley), this protein is Chalcone--flavanone isomerase (CHI).